The primary structure comprises 428 residues: Adenylosuccinate synthetase (428 aa).

Residues 12-18 and 40-42 each bind GTP; these read GDEGKGK and GHT. Aspartate 13 (proton acceptor) is an active-site residue. Positions 13 and 40 each coordinate Mg(2+). IMP contacts are provided by residues 13–16, 38–41, threonine 130, arginine 144, glutamine 225, threonine 240, and arginine 304; these read DEGK and NAGH. Histidine 41 functions as the Proton donor in the catalytic mechanism. 300–306 is a binding site for substrate; that stretch reads VTTGRAR. Residues arginine 306, 332-334, and 414-416 contribute to the GTP site; these read KID and SVG.

This sequence belongs to the adenylosuccinate synthetase family. Homodimer. Requires Mg(2+) as cofactor.

It is found in the cytoplasm. It catalyses the reaction IMP + L-aspartate + GTP = N(6)-(1,2-dicarboxyethyl)-AMP + GDP + phosphate + 2 H(+). The protein operates within purine metabolism; AMP biosynthesis via de novo pathway; AMP from IMP: step 1/2. In terms of biological role, plays an important role in the de novo pathway of purine nucleotide biosynthesis. Catalyzes the first committed step in the biosynthesis of AMP from IMP. The sequence is that of Adenylosuccinate synthetase from Clostridium botulinum (strain Okra / Type B1).